A 156-amino-acid chain; its full sequence is MNLNATFFAQMVVFFILWWVVAKFIWPPLVKALDERAKKIADGLAAAEKGKAELELANKRVDQAMAEARTEGAQRVADAEKRAQLTADEIKQNAQAEAARIIAQAKAEAEQQATRAREALRDQVAVLAVKGAEQILKREVNAQVHADLLNQLKAEL.

A helical membrane pass occupies residues 7 to 27 (FFAQMVVFFILWWVVAKFIWP).

It belongs to the ATPase B chain family. F-type ATPases have 2 components, F(1) - the catalytic core - and F(0) - the membrane proton channel. F(1) has five subunits: alpha(3), beta(3), gamma(1), delta(1), epsilon(1). F(0) has three main subunits: a(1), b(2) and c(10-14). The alpha and beta chains form an alternating ring which encloses part of the gamma chain. F(1) is attached to F(0) by a central stalk formed by the gamma and epsilon chains, while a peripheral stalk is formed by the delta and b chains.

Its subcellular location is the cell inner membrane. Its function is as follows. F(1)F(0) ATP synthase produces ATP from ADP in the presence of a proton or sodium gradient. F-type ATPases consist of two structural domains, F(1) containing the extramembraneous catalytic core and F(0) containing the membrane proton channel, linked together by a central stalk and a peripheral stalk. During catalysis, ATP synthesis in the catalytic domain of F(1) is coupled via a rotary mechanism of the central stalk subunits to proton translocation. Functionally, component of the F(0) channel, it forms part of the peripheral stalk, linking F(1) to F(0). This Cupriavidus taiwanensis (strain DSM 17343 / BCRC 17206 / CCUG 44338 / CIP 107171 / LMG 19424 / R1) (Ralstonia taiwanensis (strain LMG 19424)) protein is ATP synthase subunit b.